The chain runs to 299 residues: 33 kDa chaperonin (299 aa).

Disulfide bonds link C238–C240 and C271–C274.

The protein belongs to the HSP33 family. Post-translationally, under oxidizing conditions two disulfide bonds are formed involving the reactive cysteines. Under reducing conditions zinc is bound to the reactive cysteines and the protein is inactive.

The protein resides in the cytoplasm. Redox regulated molecular chaperone. Protects both thermally unfolding and oxidatively damaged proteins from irreversible aggregation. Plays an important role in the bacterial defense system toward oxidative stress. The chain is 33 kDa chaperonin from Alkaliphilus oremlandii (strain OhILAs) (Clostridium oremlandii (strain OhILAs)).